Here is a 612-residue protein sequence, read N- to C-terminus: tRNA 5-methylaminomethyl-2-thiouridine biosynthesis bifunctional protein MnmC (612 aa).

The tRNA (mnm(5)s(2)U34)-methyltransferase stretch occupies residues 1–218 (MITFRGDGLY…KREILEASLE (218 aa)). An FAD-dependent cmnm(5)s(2)U34 oxidoreductase region spans residues 244 to 612 (IGAGVAGLAA…VRKLKRGLVR (369 aa)).

This sequence in the N-terminal section; belongs to the methyltransferase superfamily. tRNA (mnm(5)s(2)U34)-methyltransferase family. The protein in the C-terminal section; belongs to the DAO family. The cofactor is FAD.

The protein resides in the cytoplasm. The catalysed reaction is 5-aminomethyl-2-thiouridine(34) in tRNA + S-adenosyl-L-methionine = 5-methylaminomethyl-2-thiouridine(34) in tRNA + S-adenosyl-L-homocysteine + H(+). In terms of biological role, catalyzes the last two steps in the biosynthesis of 5-methylaminomethyl-2-thiouridine (mnm(5)s(2)U) at the wobble position (U34) in tRNA. Catalyzes the FAD-dependent demodification of cmnm(5)s(2)U34 to nm(5)s(2)U34, followed by the transfer of a methyl group from S-adenosyl-L-methionine to nm(5)s(2)U34, to form mnm(5)s(2)U34. The protein is tRNA 5-methylaminomethyl-2-thiouridine biosynthesis bifunctional protein MnmC of Campylobacter fetus subsp. fetus (strain 82-40).